Consider the following 257-residue polypeptide: Adenosylcobinamide-GDP ribazoletransferase (257 aa).

7 helical membrane-spanning segments follow: residues isoleucine 30 to isoleucine 50, methionine 52 to threonine 72, serine 109 to serine 129, serine 132 to tyrosine 152, leucine 175 to leucine 195, asparagine 198 to phenylalanine 218, and glycine 237 to phenylalanine 257.

This sequence belongs to the CobS family. Mg(2+) is required as a cofactor.

The protein resides in the cell membrane. The enzyme catalyses alpha-ribazole + adenosylcob(III)inamide-GDP = adenosylcob(III)alamin + GMP + H(+). The catalysed reaction is alpha-ribazole 5'-phosphate + adenosylcob(III)inamide-GDP = adenosylcob(III)alamin 5'-phosphate + GMP + H(+). It participates in cofactor biosynthesis; adenosylcobalamin biosynthesis; adenosylcobalamin from cob(II)yrinate a,c-diamide: step 7/7. Functionally, joins adenosylcobinamide-GDP and alpha-ribazole to generate adenosylcobalamin (Ado-cobalamin). Also synthesizes adenosylcobalamin 5'-phosphate from adenosylcobinamide-GDP and alpha-ribazole 5'-phosphate. This Clostridioides difficile (strain 630) (Peptoclostridium difficile) protein is Adenosylcobinamide-GDP ribazoletransferase.